The following is a 69-amino-acid chain: Chondroitin proteoglycan 9 (69 aa).

Positions 1–19 (MHLWQLVLLVILFFGAAFG) are cleaved as a signal peptide. O-linked (Xyl...) (chondroitin sulfate) serine glycans are attached at residues Ser25 and Ser27.

This chain is Chondroitin proteoglycan 9, found in Caenorhabditis elegans.